The chain runs to 215 residues: Beta-crystallin A3-2 (215 aa).

The N-terminal arm stretch occupies residues 1–30 (MEIPAIQTEREDITSEKMAQINPLPVPLGP). Beta/gamma crystallin 'Greek key' domains lie at 31–70 (WKITVYDQENFQGKRMEFTSSCANIMECGFDNIRSLKVEC) and 71–117 (GAWI…RPIC). The interval 118–123 (SANHEE) is connecting peptide. 2 Beta/gamma crystallin 'Greek key' domains span residues 124–165 (SKLV…KVQC) and 166–214 (GAWV…RRIQ).

It belongs to the beta/gamma-crystallin family. In terms of assembly, homo/heterodimer, or complexes of higher-order. The structure of beta-crystallin oligomers seems to be stabilized through interactions between the N-terminal arms. The N-terminus is blocked.

In terms of biological role, crystallins are the dominant structural components of the vertebrate eye lens. The protein is Beta-crystallin A3-2 of Aquarana catesbeiana (American bullfrog).